Consider the following 214-residue polypeptide: Peptidyl-tRNA hydrolase (214 aa).

A tRNA-binding site is contributed by Tyr14. His19 acts as the Proton acceptor in catalysis. 3 residues coordinate tRNA: Tyr64, Asn66, and Asn113. The tract at residues 184-214 (RINAPPPKPEKKRGSETSDPSAESADHAGGG) is disordered.

It belongs to the PTH family. As to quaternary structure, monomer.

It is found in the cytoplasm. It carries out the reaction an N-acyl-L-alpha-aminoacyl-tRNA + H2O = an N-acyl-L-amino acid + a tRNA + H(+). Functionally, hydrolyzes ribosome-free peptidyl-tRNAs (with 1 or more amino acids incorporated), which drop off the ribosome during protein synthesis, or as a result of ribosome stalling. In terms of biological role, catalyzes the release of premature peptidyl moieties from peptidyl-tRNA molecules trapped in stalled 50S ribosomal subunits, and thus maintains levels of free tRNAs and 50S ribosomes. This is Peptidyl-tRNA hydrolase from Roseiflexus castenholzii (strain DSM 13941 / HLO8).